The sequence spans 1276 residues: cGMP-specific 3',5'-cyclic phosphodiesterase (1276 aa).

Disordered regions lie at residues 1–76 (MHEL…TAAG), 91–185 (NQVK…QQDV), and 241–260 (ASPT…SASS). Composition is skewed to low complexity over residues 12-47 (SSSS…SSAS) and 57-76 (TSTA…TAAG). Residues 109–124 (APYPPVPAAKPKPTPT) are compositionally biased toward pro residues. Over residues 129–140 (SKFKSTSREVDV) the composition is skewed to basic and acidic residues. A compositionally biased stretch (polar residues) spans 147 to 166 (ARSSTISPGVSIHTQTIQQE). 2 stretches are compositionally biased toward low complexity: residues 167 to 180 (SSSA…SSSS) and 249 to 260 (SPRSLSNSSASS). GAF domains are found at residues 290–442 (DIDV…GIGI) and 474–658 (NLEC…GLGI). The region spanning 688-1119 (SQDQTEKLTQ…RNWQDLAEKV (432 aa)) is the PDEase domain. Catalysis depends on His764, which acts as the Proton donor. A divalent metal cation-binding residues include His768, His804, Asp805, and Asp1023. Disordered stretches follow at residues 1162-1193 (AQHG…TGAL) and 1205-1276 (LYNS…CSLL). Basic and acidic residues-rich tracts occupy residues 1171-1180 (DDSHTPEHQR) and 1221-1233 (LESH…DDKS). Low complexity predominate over residues 1248–1263 (GRMSASSSTSSAGTVV). Residues 1266 to 1276 (SKKRSKLCSLL) are compositionally biased toward basic residues. Cys1273 carries the cysteine methyl ester modification. Residue Cys1273 is the site of S-farnesyl cysteine attachment. A propeptide spans 1274–1276 (SLL) (removed in mature form).

Belongs to the cyclic nucleotide phosphodiesterase family. Interacts with PrBP. A divalent metal cation serves as cofactor.

It localises to the cell membrane. The enzyme catalyses 3',5'-cyclic GMP + H2O = GMP + H(+). Its function is as follows. Has a role regulating cGMP transport in Malpighian tubule principal cells. The chain is cGMP-specific 3',5'-cyclic phosphodiesterase from Drosophila persimilis (Fruit fly).